Here is a 683-residue protein sequence, read N- to C-terminus: FAD-binding monooxygenase ausC (683 aa).

The N-linked (GlcNAc...) asparagine glycan is linked to Asn5. The helical transmembrane segment at 111-131 (ILIIGAGFGGLLFAVRLIQTG) threads the bilayer. FAD is bound by residues 150-153 (TWYW), 162-163 (DT), and Tyr168. An NADP(+)-binding site is contributed by 160–162 (MCD). N-linked (GlcNAc...) asparagine glycosylation occurs at Asn286. NADP(+) contacts are provided by residues 310–316 (TGASAVQ) and 333–334 (RT). Asn525 and Asn572 each carry an N-linked (GlcNAc...) asparagine glycan.

The protein belongs to the FAD-binding monooxygenase family. Requires FAD as cofactor.

It localises to the membrane. The catalysed reaction is preaustinoid A + AH2 + O2 = preaustinoid A1 + A + H2O. It functions in the pathway secondary metabolite biosynthesis; terpenoid biosynthesis. Functionally, FAD-binding monooxygenase; part of the gene cluster A that mediates the biosynthesis of austinol and dehydroaustinol, two fungal meroterpenoids. The first step of the pathway is the synthesis of 3,5-dimethylorsellinic acid by the polyketide synthase ausA. 3,5-dimethylorsellinic acid is then prenylated by the polyprenyl transferase ausN. Further epoxidation by the FAD-dependent monooxygenase ausM and cyclization by the probable terpene cyclase ausL lead to the formation of protoaustinoid A. Protoaustinoid A is then oxidized to spiro-lactone preaustinoid A3 by the combined action of the FAD-binding monooxygenases ausB and ausC, and the dioxygenase ausE. Acid-catalyzed keto-rearrangement and ring contraction of the tetraketide portion of preaustinoid A3 by ausJ lead to the formation of preaustinoid A4. The aldo-keto reductase ausK, with the help of ausH, is involved in the next step by transforming preaustinoid A4 into isoaustinone which is in turn hydroxylated by the P450 monooxygenase ausI to form austinolide. Finally, the cytochrome P450 monooxygenase ausG modifies austinolide to austinol. Austinol can be further modified to dehydroaustinol which forms a diffusible complex with diorcinol that initiates conidiation. Due to genetic rearrangements of the clusters and the subsequent loss of some enzymes, the end products of the Emericella nidulans austinoid biosynthesis clusters are austinol and dehydroaustinol, even if additional enzymes, such as the O-acetyltransferase ausQ and the cytochrome P450 monooxygenase ausR are still functional. The chain is FAD-binding monooxygenase ausC from Emericella nidulans (strain FGSC A4 / ATCC 38163 / CBS 112.46 / NRRL 194 / M139) (Aspergillus nidulans).